We begin with the raw amino-acid sequence, 345 residues long: Mitochondrial substrate carrier family protein J (345 aa).

Topologically, residues 1 to 31 are mitochondrial intermembrane; the sequence is MSSSHTIQETKEVHTKTNKRIQWDDLDPKRY. Solcar repeat units lie at residues 30–118, 129–217, and 255–342; these read RYYF…VKQG, DLLF…SKSK, and EDPI…VKKL. Residues 32-52 form a helical membrane-spanning segment; sequence YFYNFLLGGSIDLLMFPLDVI. Residues 53-88 lie on the Mitochondrial matrix side of the membrane; it reads RTRLQVQGSQNVIQSFPQYNGTFDGFKKLIRLEGKR. A helical transmembrane segment spans residues 89–110; that stretch reads ALYKGFLTSECGYLCSRAIYFG. Over 111-129 the chain is Mitochondrial intermembrane; the sequence is SYEFVKQGFLKGRSDSDSD. A helical membrane pass occupies residues 130-150; it reads LLFVTTISGAISEALASVIWV. Over 151–191 the chain is Mitochondrial matrix; that stretch reads PFDVATQSVQIQGSLSKPKYKGGSDVFKKIYGERGIKGLYK. A helical membrane pass occupies residues 192-208; the sequence is GFGATIIRNVPYSGIWW. The Mitochondrial intermembrane portion of the chain corresponds to 209–257; the sequence is GTYEISKSKLTQFNIRQKLGLKERSSHSLAVSAEIDKNNPSHEVENEDP. A helical membrane pass occupies residues 258–278; that stretch reads IIHFISGFFAAVFATSITNPL. Over 279–316 the chain is Mitochondrial matrix; that stretch reads DVAKTRLQTGVFPENEKPNFYTIIKSTIRKEGIRALWK. A helical membrane pass occupies residues 317–337; it reads GLVPSLLTSTPYSMISIFLYE. Topologically, residues 338–345 are mitochondrial intermembrane; sequence EVKKLSLK.

Belongs to the mitochondrial carrier (TC 2.A.29) family.

It is found in the mitochondrion inner membrane. Functionally, mitochondrial solute carriers shuttle metabolites, nucleotides, and cofactors through the mitochondrial inner membrane. This is Mitochondrial substrate carrier family protein J (mcfJ) from Dictyostelium discoideum (Social amoeba).